The following is a 324-amino-acid chain: Glyoxylate/hydroxypyruvate reductase B (324 aa).

Residues Arg237 and Glu266 contribute to the active site. His285 functions as the Proton donor in the catalytic mechanism.

It belongs to the D-isomer specific 2-hydroxyacid dehydrogenase family. GhrB subfamily. In terms of assembly, homodimer.

Its subcellular location is the cytoplasm. The catalysed reaction is glycolate + NADP(+) = glyoxylate + NADPH + H(+). The enzyme catalyses (R)-glycerate + NAD(+) = 3-hydroxypyruvate + NADH + H(+). It catalyses the reaction (R)-glycerate + NADP(+) = 3-hydroxypyruvate + NADPH + H(+). Functionally, catalyzes the NADPH-dependent reduction of glyoxylate and hydroxypyruvate into glycolate and glycerate, respectively. This is Glyoxylate/hydroxypyruvate reductase B from Shigella flexneri.